The following is a 196-amino-acid chain: Probable malonic semialdehyde reductase RutE (196 aa).

This sequence belongs to the nitroreductase family. HadB/RutE subfamily. FMN serves as cofactor.

It carries out the reaction 3-hydroxypropanoate + NADP(+) = 3-oxopropanoate + NADPH + H(+). May reduce toxic product malonic semialdehyde to 3-hydroxypropionic acid, which is excreted. This chain is Probable malonic semialdehyde reductase RutE, found in Escherichia coli O8 (strain IAI1).